The sequence spans 246 residues: Acetoacetate decarboxylase (246 aa).

The Schiff-base intermediate with acetoacetate role is filled by K116.

This sequence belongs to the ADC family.

The enzyme catalyses acetoacetate + H(+) = acetone + CO2. Catalyzes the conversion of acetoacetate to acetone and carbon dioxide. The chain is Acetoacetate decarboxylase from Burkholderia cenocepacia (strain HI2424).